Consider the following 202-residue polypeptide: Orotate phosphoribosyltransferase (202 aa).

Residues Lys-93 and 113–121 (EDIITTGGS) each bind 5-phospho-alpha-D-ribose 1-diphosphate. Residues Thr-117 and Arg-145 each contribute to the orotate site.

The protein belongs to the purine/pyrimidine phosphoribosyltransferase family. PyrE subfamily. Homodimer. Mg(2+) serves as cofactor.

The catalysed reaction is orotidine 5'-phosphate + diphosphate = orotate + 5-phospho-alpha-D-ribose 1-diphosphate. It participates in pyrimidine metabolism; UMP biosynthesis via de novo pathway; UMP from orotate: step 1/2. Catalyzes the transfer of a ribosyl phosphate group from 5-phosphoribose 1-diphosphate to orotate, leading to the formation of orotidine monophosphate (OMP). In Campylobacter jejuni subsp. jejuni serotype O:2 (strain ATCC 700819 / NCTC 11168), this protein is Orotate phosphoribosyltransferase.